The following is a 336-amino-acid chain: N-acetyl-gamma-glutamyl-phosphate reductase (336 aa).

Residue C148 is part of the active site.

This sequence belongs to the NAGSA dehydrogenase family. Type 1 subfamily.

It is found in the cytoplasm. It carries out the reaction N-acetyl-L-glutamate 5-semialdehyde + phosphate + NADP(+) = N-acetyl-L-glutamyl 5-phosphate + NADPH + H(+). Its pathway is amino-acid biosynthesis; L-arginine biosynthesis; N(2)-acetyl-L-ornithine from L-glutamate: step 3/4. In terms of biological role, catalyzes the NADPH-dependent reduction of N-acetyl-5-glutamyl phosphate to yield N-acetyl-L-glutamate 5-semialdehyde. The protein is N-acetyl-gamma-glutamyl-phosphate reductase of Campylobacter curvus (strain 525.92).